A 367-amino-acid polypeptide reads, in one-letter code: MASEICKTISVARLEKHKNLFLNYRNLHHFPLELLKDEGLQHLERLYMKRNSLTTLPENLAQKLPNLVELYLHSNNIVVVPEAIGSLVKLQCLDLSDNALEIVCPEIGGLRALRHLRLANNQLQFLPPEVGDLKELQTLDISSNRLLALPERLHLCLSLQYLTVDRNRLCCVPRHLCQLPSLNELSMAGNHLASLPIDLGRSRELQYVYVDNNIQLKGLPSYLYNKVIGCNGCGIPIQLSEVRLLTFSSGQLTVFLPAEVKTIGTEKDHVLPLQELTMRSLYRTYHGLWKDLNFLSPISLPRSLLELLHCPLGHCHLCSEPMFTFVYPKIFPLRETPMAGLHQRRTSIGFVAYCCSTQCLRTFNLLC.

LRR repeat units lie at residues 16–36 (KHKN…ELLK), 42–63 (HLER…LAQK), 66–87 (NLVE…IGSL), 89–111 (KLQC…GGLR), 112–133 (ALRH…VGDL), 135–156 (ELQT…LHLC), 158–180 (SLQY…CQLP), 181–202 (SLNE…LGRS), and 204–226 (ELQY…LYNK).

This chain is Leucine-rich repeat-containing protein 28 (Lrrc28), found in Mus musculus (Mouse).